A 171-amino-acid chain; its full sequence is Adenine phosphoribosyltransferase (171 aa).

It belongs to the purine/pyrimidine phosphoribosyltransferase family. Homodimer.

The protein localises to the cytoplasm. It carries out the reaction AMP + diphosphate = 5-phospho-alpha-D-ribose 1-diphosphate + adenine. It functions in the pathway purine metabolism; AMP biosynthesis via salvage pathway; AMP from adenine: step 1/1. Functionally, catalyzes a salvage reaction resulting in the formation of AMP, that is energically less costly than de novo synthesis. In Gloeobacter violaceus (strain ATCC 29082 / PCC 7421), this protein is Adenine phosphoribosyltransferase.